The following is a 325-amino-acid chain: MAVGNNTQRSYSIIPCFIFVELVIMAGTVLLAYYFECTDTFQVHIQGFFCQDGDLMKPYPGTEEESFITPLVLYCVLAATPTAIIFIGEISMYFIKSTRESLIAQEKTILTGECCYLNPLLRRIIRFTGVFAFGLFATDIFVNAGQVVTGHLTPYFLTVCKPNYTSADCQAHHQFINNGNICTGDLEVIEKARRSFPSKHAALSIYSALYATMYITSTIKTKSSRLAKPVLCLGTLCTAFLTGLNRVSEYRNHCSDVIAGFILGTAVALFLGMCVVHNFKGTQGSPSKPKPEDPRGVPLMAFPRIESPLETLSAQNHSASMTEVT.

N5 carries N-linked (GlcNAc...) asparagine glycosylation. Transmembrane regions (helical) follow at residues 13–33 (IIPC…LLAY), 67–87 (FITP…IIFI), and 127–147 (FTGV…AGQV). An N-linked (GlcNAc...) asparagine glycan is attached at N163. The next 3 helical transmembrane spans lie at 201–218 (AALS…ITST), 230–247 (VLCL…LNRV), and 257–277 (VIAG…CVVH). S307 is subject to Phosphoserine. The N-linked (GlcNAc...) asparagine glycan is linked to N316.

It belongs to the PA-phosphatase related phosphoesterase family.

The protein localises to the cell membrane. The protein resides in the cell projection. Its subcellular location is the neuron projection. May play a role in neurite outgrowth and neurogenesis. In Homo sapiens (Human), this protein is Phospholipid phosphatase-related protein type 1.